Consider the following 720-residue polypeptide: Probable ATP-dependent RNA helicase DHX35 (720 aa).

Residues 64–229 (LYLIENYQTV…FNQNETSDPA (166 aa)) form the Helicase ATP-binding domain. 77–84 (GETGCGKS) serves as a coordination point for ATP. The DEAH box motif lies at 176 to 179 (DEAH). One can recognise a Helicase C-terminal domain in the interval 261-438 (TVETVVKIHQ…PVILQLKALG (178 aa)).

Belongs to the DEAD box helicase family. DEAH subfamily. As to quaternary structure, identified in the spliceosome C complex.

The catalysed reaction is ATP + H2O = ADP + phosphate + H(+). Functionally, may be involved in pre-mRNA splicing. The polypeptide is Probable ATP-dependent RNA helicase DHX35 (DHX35) (Pongo abelii (Sumatran orangutan)).